Reading from the N-terminus, the 488-residue chain is MGSRFVSNEQKPHVVCVPYPAQGHINPMMKVAKLLHVKGFHVTFVNTVYNHNRLLRSRGANALDGLPSFQFESIPDGLPETGVDATQDIPALSESTTKNCLVPFKKLLQRIVTREDVPPVSCIVSDGSMSFTLDVAEELGVPEIHFWTTSACGFMAYLHFYLFIEKGLCPVKDASCLTKEYLDTVIDWIPSMNNVKLKDIPSFIRTTNPNDIMLNFVVREACRTKRASAIILNTFDDLEHDIIQSMQSILPPVYPIGPLHLLVNREIEEDSEIGRMGSNLWKEETECLGWLNTKSRNSVVYVNFGSITIMTTAQLLEFAWGLAATGKEFLWVMRPDSVAGEEAVIPKEFLAETADRRMLTSWCPQEKVLSHPAVGGFLTHCGWNSTLESLSCGVPMVCWPFFAEQQTNCKFSCDEWEVGIEIGGDVKRGEVEAVVRELMDGEKGKKMREKAVEWRRLAEKATKLPCGSSVINFETIVNKVLLGKIPNT.

Residues serine 306, 363-365 (CPQ), 380-388 (HCGWNSTLE), and 402-405 (FAEQ) each bind UDP-alpha-D-glucose.

Belongs to the UDP-glycosyltransferase family. In terms of tissue distribution, expressed in roots and flowers.

The polypeptide is UDP-glycosyltransferase 85A3 (UGT85A3) (Arabidopsis thaliana (Mouse-ear cress)).